Consider the following 442-residue polypeptide: Septin-8 (442 aa).

Residues 1 to 16 (MAATDLERISNAEPEP) are compositionally biased toward basic and acidic residues. The segment at 1–21 (MAATDLERISNAEPEPRSLSL) is disordered. An N-acetylalanine modification is found at alanine 2. Serine 10 carries the phosphoserine modification. The 267-residue stretch at 41-307 (QGFSFNILCV…ELYRRCKLEE (267 aa)) folds into the Septin-type G domain. The interval 51-58 (GETGIGKS) is G1 motif. Residues 51 to 58 (GETGIGKS), glycine 106, 187 to 195 (KADTISKSE), glycine 241, and arginine 256 contribute to the GTP site. The G3 motif stretch occupies residues 103–106 (DAVG). The G4 motif stretch occupies residues 186–189 (AKAD). Positions 322–407 (LQETYEAKRK…FNCRKAAMEA (86 aa)) form a coiled coil. Residues 411–420 (QALHATSQQP) are compositionally biased toward polar residues. The tract at residues 411–442 (QALHATSQQPLRKDKDKKKVGGWSSIYSVTIP) is disordered.

Belongs to the TRAFAC class TrmE-Era-EngA-EngB-Septin-like GTPase superfamily. Septin GTPase family. Septins polymerize into heterooligomeric protein complexes that form filaments, and can associate with cellular membranes, actin filaments and microtubules. GTPase activity is required for filament formation. Interacts with SEPTIN7. Interacts with CDK14, SEPTIN4 and SEPTIN5. Interacts with VAMP2; the interaction inhibits interaction of VAMP2 with SYP. Interacts with STX1A. In terms of tissue distribution, expressed in cerebrum, hippocampus and cerebellum (at protein level). Expressed in heart (at protein level).

It localises to the cytoplasm. It is found in the cytoskeleton. The protein localises to the synapse. The protein resides in the cell projection. Its subcellular location is the axon. It localises to the cytoplasmic vesicle. It is found in the secretory vesicle. The protein localises to the synaptic vesicle membrane. The protein resides in the presynapse. In terms of biological role, filament-forming cytoskeletal GTPase. May play a role in platelet secretion. Seems to participate in the process of SNARE complex formation in synaptic vesicles. The chain is Septin-8 from Rattus norvegicus (Rat).